The chain runs to 233 residues: Fibrillarin-like rRNA/tRNA 2'-O-methyltransferase (233 aa).

S-adenosyl-L-methionine contacts are provided by residues 89–90 (TT), 108–109 (EF), 133–134 (DA), and 153–156 (DIAQ).

This sequence belongs to the methyltransferase superfamily. Fibrillarin family. As to quaternary structure, interacts with nop5. Component of box C/D small ribonucleoprotein (sRNP) particles that contain rpl7ae, FlpA and nop5, plus a guide RNA.

In terms of biological role, involved in pre-rRNA and tRNA processing. Utilizes the methyl donor S-adenosyl-L-methionine to catalyze the site-specific 2'-hydroxyl methylation of ribose moieties in rRNA and tRNA. Site specificity is provided by a guide RNA that base pairs with the substrate. Methylation occurs at a characteristic distance from the sequence involved in base pairing with the guide RNA. The polypeptide is Fibrillarin-like rRNA/tRNA 2'-O-methyltransferase (Sulfurisphaera tokodaii (strain DSM 16993 / JCM 10545 / NBRC 100140 / 7) (Sulfolobus tokodaii)).